The chain runs to 402 residues: Protochlorophyllide reductase B, chloroplastic (402 aa).

Belongs to the short-chain dehydrogenases/reductases (SDR) family. POR subfamily.

The protein resides in the plastid. It is found in the chloroplast. It carries out the reaction chlorophyllide a + NADP(+) = protochlorophyllide a + NADPH + H(+). Its pathway is porphyrin-containing compound metabolism; chlorophyll biosynthesis. In terms of biological role, phototransformation of protochlorophyllide (Pchlide) to chlorophyllide (Chlide). This chain is Protochlorophyllide reductase B, chloroplastic (PORB), found in Oryza sativa subsp. japonica (Rice).